A 397-amino-acid chain; its full sequence is Cercosporin biosynthesis regulatory protein CTB8 (397 aa).

Positions 26–53 (CTHCSSQKIRCTKERPACARCVNKGLLC) form a DNA-binding region, zn(2)-C6 fungal-type. 2 disordered regions span residues 62-92 (GTRRHSVRATPEPETTISNAPTSSVPPDSVK) and 173-198 (AEASTRPSSSSSPPSQRSDGGRATTH). The segment covering 74-87 (PETTISNAPTSSVP) has biased composition (polar residues). Low complexity predominate over residues 179 to 197 (PSSSSSPPSQRSDGGRATT).

The protein resides in the nucleus. In terms of biological role, transcription regulator of the gene cluster that mediates the biosynthesis of cercosporin, a light-activated, non-host-selective toxin. The perylenequinone chromophore of cercosporin absorbs light energy to attain an electronically-activated triplet state and produces active oxygen species such as the hydroxyl radical, superoxide, hydrogen peroxide or singlet oxygen upon reaction with oxygen molecules. These reactive oxygen species cause damage to various cellular components including lipids, proteins and nucleic acids. The polypeptide is Cercosporin biosynthesis regulatory protein CTB8 (Cercospora nicotianae (Barn spot disease fungus)).